Reading from the N-terminus, the 232-residue chain is tRNA1(Val) (adenine(37)-N6)-methyltransferase (232 aa).

Belongs to the methyltransferase superfamily. tRNA (adenine-N(6)-)-methyltransferase family.

Its subcellular location is the cytoplasm. It catalyses the reaction adenosine(37) in tRNA1(Val) + S-adenosyl-L-methionine = N(6)-methyladenosine(37) in tRNA1(Val) + S-adenosyl-L-homocysteine + H(+). Functionally, specifically methylates the adenine in position 37 of tRNA(1)(Val) (anticodon cmo5UAC). The polypeptide is tRNA1(Val) (adenine(37)-N6)-methyltransferase (Haemophilus influenzae (strain ATCC 51907 / DSM 11121 / KW20 / Rd)).